Reading from the N-terminus, the 497-residue chain is Guanosine-5'-triphosphate,3'-diphosphate pyrophosphatase (497 aa).

Belongs to the GppA/Ppx family. GppA subfamily.

The catalysed reaction is guanosine 3'-diphosphate 5'-triphosphate + H2O = guanosine 3',5'-bis(diphosphate) + phosphate + H(+). The protein operates within purine metabolism; ppGpp biosynthesis; ppGpp from GTP: step 2/2. Functionally, catalyzes the conversion of pppGpp to ppGpp. Guanosine pentaphosphate (pppGpp) is a cytoplasmic signaling molecule which together with ppGpp controls the 'stringent response', an adaptive process that allows bacteria to respond to amino acid starvation, resulting in the coordinated regulation of numerous cellular activities. The sequence is that of Guanosine-5'-triphosphate,3'-diphosphate pyrophosphatase from Pseudoalteromonas translucida (strain TAC 125).